A 250-amino-acid chain; its full sequence is Probable syntaxin-8B (250 aa).

Residues 1–213 (MGDYWLNEHD…NRRMETIKQN (213 aa)) are Cytoplasmic-facing. The stretch at 73–100 (EKELLRRKNKVESLISMKNQLNSTLDAA) forms a coiled coil. The t-SNARE coiled-coil homology domain maps to 148-210 (QHIMREQDES…RNANRRMETI (63 aa)). A helical; Anchor for type IV membrane protein transmembrane segment spans residues 214–234 (AGSTCMIVCIVILIILIVVLI). At 235 to 250 (ATDSGCKIYNDPKHCP) the chain is on the vesicular side.

It belongs to the syntaxin family.

The protein resides in the membrane. The protein is Probable syntaxin-8B (syn8B) of Dictyostelium discoideum (Social amoeba).